Consider the following 458-residue polypeptide: Ectonucleotide pyrophosphatase/phosphodiesterase family member 7 (458 aa).

A signal peptide spans 1–21 (MRGPAVLLTVALATLLAPGAG). At 22–433 (APVQSQGSQN…RPTLLPKGRS (412 aa)) the chain is on the extracellular side. Zn(2+) is bound by residues Asp-39 and Thr-75. Residues 72-78 (VTMTSPC) are required for enzyme activity. Residue Thr-75 is the Nucleophile of the active site. Substrate is bound at residue Asn-96. N-linked (GlcNAc...) asparagine glycosylation is found at Asn-100, Asn-121, Asn-146, and Asn-168. 4 residues coordinate Zn(2+): Asp-199, His-203, Asp-246, and His-247. Residue Asn-267 is glycosylated (N-linked (GlcNAc...) asparagine). Position 353 (His-353) interacts with Zn(2+). A helical transmembrane segment spans residues 434–454 (ALPPSSRPLLVMGLLGTVILL). The Cytoplasmic portion of the chain corresponds to 455–458 (SEVA).

The protein belongs to the nucleotide pyrophosphatase/phosphodiesterase family. Requires Zn(2+) as cofactor. Post-translationally, N-glycosylated; required for activity and transport to the plasma membrane. In terms of tissue distribution, detected in the colon (at protein level). Expressed in the duodenum, jejunum and liver and at low levels in the ileum. Expression was very low in the esophagus, stomach and colon.

It localises to the cell membrane. It catalyses the reaction a sphingomyelin + H2O = phosphocholine + an N-acylsphing-4-enine + H(+). The catalysed reaction is 1-hexadecanoyl-sn-glycero-3-phosphocholine + H2O = 1-hexadecanoyl-sn-glycerol + phosphocholine + H(+). It carries out the reaction a 1-O-alkyl-2-acetyl-sn-glycero-3-phosphocholine + H2O = a 1-O-alkyl-2-acetyl-sn-glycerol + phosphocholine + H(+). The enzyme catalyses 1-O-octadecyl-2-acetyl-sn-glycero-3-phosphocholine + H2O = 1-O-octadecyl-2-acetyl-sn-glycerol + phosphocholine + H(+). Inhibited in a dose dependent manner by ATP, imidazole, orthovanadate and zinc ion. Not inhibited by ADP, AMP and EDTA. Its function is as follows. Choline-specific phosphodiesterase that hydrolyzes sphingomyelin releasing the ceramide and phosphocholine and therefore is involved in sphingomyelin digestion, ceramide formation, and fatty acid (FA) absorption in the gastrointestinal tract. Also has phospholipase C activity and can also cleave phosphocholine from palmitoyl lyso-phosphatidylcholine and platelet-activating factor (PAF) leading to its inactivation. Does not have nucleotide pyrophosphatase activity. May promote cholesterol absorption by affecting the levels of sphingomyelin derived from either diet or endogenous sources, in the intestinal lumen. The chain is Ectonucleotide pyrophosphatase/phosphodiesterase family member 7 from Homo sapiens (Human).